A 324-amino-acid chain; its full sequence is Non-homologous end joining protein Ku 1 (324 aa).

Residues 10-193 (INFGLVTIPV…AKPSDKEIQM (184 aa)) form the Ku domain. Residues 256-324 (QARRGRGGQV…SGGRRRRRAS (69 aa)) are disordered. Over residues 281–292 (AELDKKAKELGI) the composition is skewed to basic and acidic residues.

Belongs to the prokaryotic Ku family. As to quaternary structure, homodimer. Interacts with LigD.

In terms of biological role, with LigD forms a non-homologous end joining (NHEJ) DNA repair enzyme, which repairs dsDNA breaks with reduced fidelity. Binds linear dsDNA with 5'- and 3'- overhangs but not closed circular dsDNA nor ssDNA. Recruits and stimulates the ligase activity of LigD. The sequence is that of Non-homologous end joining protein Ku 1 from Saccharopolyspora erythraea (strain ATCC 11635 / DSM 40517 / JCM 4748 / NBRC 13426 / NCIMB 8594 / NRRL 2338).